A 1110-amino-acid chain; its full sequence is MSSSTNGHSQSNFAKFAFNIYGTLSTTSSSTPQSHEISPSPSSSLSSSRSRRNKQSFRAATGHRLTYQCDKETISLSQLNYPLQVGGYGTELHSIVIGGKNYLRLLCISESQQRIIDDINLLESKSIYNSRVGSKLININTIKTYESTIATGLSNGVVSVYKISPNGQGKQTGRFSDHKRTINSLDFIESENQLLSGSQDGTIKLWDLRSSSSKPSITIQASMRSDPIRACQYSPHSSVKNKMCVLSVHDSGALCKFDLRSTGGNGNIYSPEKKWNLHTGPALSLHIHPEKEYVITGGRDQRISVFNYGEGQSNSSTPENTIITYGPVLKVRWSSYSNISQSGDEFEEAQSSLSPSKINPLYNYDIACSYLNDDPTVAIYNLSRKYVPKQIIHSKKPIQNFIWARNGHRDRNIWTLTKSNTFNSYNLDQIDEYDVSRPLDDLNNVAVAWDNNGNFSMANQDKYDFELDDNDIYDRPEGSSEAEVASHGMDPEESGNAIHFHNSATTSPVEKAALARSYTHNPMSAIQLPTKSPLPIGRNGTGFLGHDMSLPNISTRPKLTRNTSQTTQDSSVSYGSAYPIPQSANSNTTLHMKRNIISNSTKSSNTSAYVIPVVLPIVSNDEFVFKKLSSEYLVKLPDGFTMIDVCLLNASTAASVNSNRTCQVWRLLAVSLQEHFDSQKAPMTIEELEKQQMEQNENEEGVPNATVESATDSMPAKSVSSVLGNFVESYKTNSSFGTGSQINKPGKSVKSRTSSGVNLMDKINLASRTSSFSKTSFKFKEKEGVDEDGVPEDKEKQERGKAEDQETENDKKSIHSNQEPIVIRTTRHSKVEDLDDENLNIANSMAMKSSPTSVGISLPSSHTFSSSIASSPQPIRGQIPPKQQLATTRESPVHNWLDQKKNELFRGRNVVPAISGLSLALKSSNNGDEKLLTRAWKFKNLLRKSLDYAMLQGDVIFCSTAAILFYEFAEDTISEYEYLEWVSLYIDILQKKKLFVTAINILNSTAGSIKSKLQKIYSVDLDLRFYCSNCETLLVNEKSQMSQKGEFGYWYCDECNKLQSKCVYCNEPCKGLAVVVGLKCGHQGHFGCLKEWFIQDENMECPGGCDYQIL.

The disordered stretch occupies residues 27–57 (TSSSTPQSHEISPSPSSSLSSSRSRRNKQSF). Residues 38 to 48 (SPSPSSSLSSS) show a composition bias toward low complexity. 7 WD repeats span residues 132–171 (VGSKLININTIKTYESTIATGLSNGVVSVYKISPNGQGKQ), 177–216 (DHKRTINSLDFIESENQLLSGSQDGTIKLWDLRSSSSKPS), 223–267 (MRSD…GNGN), 277–316 (LHTGPALSLHIHPEKEYVITGGRDQRISVFNYGEGQSNSS), 348–390 (EAQS…VPKQ), 393–426 (HSKKPIQNFIWARNGHRDRNIWTLTKSNTFNSYN), and 439–483 (LDDL…SEAE). Over residues 552–574 (NISTRPKLTRNTSQTTQDSSVSY) the composition is skewed to polar residues. Residues 552–575 (NISTRPKLTRNTSQTTQDSSVSYG) form a disordered region. A WD 8 repeat occupies 637 to 675 (PDGFTMIDVCLLNASTAASVNSNRTCQVWRLLAVSLQEH). Disordered stretches follow at residues 692–714 (QMEQNENEEGVPNATVESATDSM), 734–755 (SSFGTGSQINKPGKSVKSRTSS), and 779–819 (FKEK…SNQE). Residues 734-743 (SSFGTGSQIN) are compositionally biased toward polar residues. Residues 791–813 (PEDKEKQERGKAEDQETENDKKS) show a composition bias toward basic and acidic residues. A WD 9 repeat occupies 860–906 (SSHTFSSSIASSPQPIRGQIPPKQQLATTRESPVHNWLDQKKNELFR). Residues 1062-1105 (CVYCNEPCKGLAVVVGLKCGHQGHFGCLKEWFIQDENMECPGGC) form an RING-type; degenerate zinc finger.

It belongs to the WD repeat RTC1 family.

It is found in the vacuole. Functionally, may be involved in a process influencing telomere capping. This chain is Restriction of telomere capping protein 1 (RTC1), found in Candida tropicalis (strain ATCC MYA-3404 / T1) (Yeast).